Consider the following 194-residue polypeptide: Alkyl hydroperoxide reductase AhpD (194 aa).

Cys132 serves as the catalytic Proton donor. An intrachain disulfide couples Cys132 to Cys135. The Cysteine sulfenic acid (-SOH) intermediate role is filled by Cys135.

This sequence belongs to the AhpD family.

It carries out the reaction N(6)-[(R)-dihydrolipoyl]-L-lysyl-[lipoyl-carrier protein] + a hydroperoxide = N(6)-[(R)-lipoyl]-L-lysyl-[lipoyl-carrier protein] + an alcohol + H2O. Functionally, antioxidant protein with alkyl hydroperoxidase activity. Required for the reduction of the AhpC active site cysteine residues and for the regeneration of the AhpC enzyme activity. This is Alkyl hydroperoxide reductase AhpD from Koribacter versatilis (strain Ellin345).